Here is a 598-residue protein sequence, read N- to C-terminus: MEHNTDISTTQYNSHTVSTTTLSSFLVNVVTSSKRGNKMTTITAQPPRDEVEPAVPAPQLLSSDSASELSPKAEKFQPGWRFIAAFLSLCIIVLMAALDATSISVALPSMARALGGSAIEAFWAGTSFLLTSTIFQPVLGSFSHIFGRKSLIYISLVFFLAGSIIPAVANNFTTILVGRSIQGVGGGGIIALTEMVVVDTVPLRERGKWFSFFGMMWSFGTVAGPLIGGAFAQKVSWRWVFWINLPFLGIGTVLITVFLKLNQRHGEFLARLREVDWIGMVLFLGSTTGFLIPITWGGVQYPWDSWRTLVPLIVSAAGIVAFIVHQEKFAPHPLIRTSVFKNKSAALLYLTTVIHGIILWAILYFMPLYFEAVKGMGPIMAGVALFPWTFTVAPGAVATGIAIAVTGKYRWANWAGWFLATLGSGLLILLKPDTSTPAWIFLNLVGGIGTGILFPAMALAVQASASVKDQAYAANMFSFFRAFGQTLGVAIGGVVFQNQMKAKLLTYPLLADMADTYSKDAAGLVEIIKGMPAGLMKDQLKESYTDALKYIWIVATVLAGVSLVATLFIDEFDMDIEMDTERGFKEKSKVKDAEKETH.

Transmembrane regions (helical) follow at residues 83–103 (IAAF…ATSI), 122–142 (FWAG…LGSF), and 150–170 (SLIY…AVAN). An N-linked (GlcNAc...) asparagine glycan is attached at asparagine 171. Transmembrane regions (helical) follow at residues 183 to 203 (GVGG…TVPL), 212 to 232 (FFGM…GAFA), 239 to 259 (WVFW…TVFL), 277 to 297 (WIGM…ITWG), and 309 to 329 (LVPL…QEKF). N-linked (GlcNAc...) asparagine glycosylation occurs at asparagine 342. The next 6 membrane-spanning stretches (helical) occupy residues 346–366 (ALLY…LYFM), 383–403 (VALF…GIAI), 411–431 (WANW…ILLK), 439–459 (WIFL…AMAL), 476–496 (MFSF…GVVF), and 550–570 (YIWI…LFID).

It belongs to the major facilitator superfamily.

Its subcellular location is the membrane. In terms of biological role, MFS transporter; part of the gene cluster that mediates the biosynthesis of squalestatin S1 (SQS1, also known as zaragozic acid A), a lead compound for the treatment of hyper-cholesterolemia by targeting squalene synthase (SS). This is MFS transporter L2 from Phoma sp. (strain ATCC 20986 / MF5453).